The primary structure comprises 164 residues: MSGNNFNASNADTDHLPQVSILAQYIKDLSFENPNAPAVYQWQTQPHIEVQFNIGTQPMAQDVYEVALKVDVSAKADEGVVFHVELVYNGLFAIKNVPADQIQPFLYIEAPRILFPFVRRILADSVRDGNFPPLMLEPIDFAALYMQQTEQQDMLSNTEPAGQA.

It belongs to the SecB family. In terms of assembly, homotetramer, a dimer of dimers. One homotetramer interacts with 1 SecA dimer.

The protein resides in the cytoplasm. In terms of biological role, one of the proteins required for the normal export of preproteins out of the cell cytoplasm. It is a molecular chaperone that binds to a subset of precursor proteins, maintaining them in a translocation-competent state. It also specifically binds to its receptor SecA. The chain is Protein-export protein SecB from Zymomonas mobilis subsp. mobilis (strain ATCC 31821 / ZM4 / CP4).